Consider the following 734-residue polypeptide: Fc receptor-like protein 3 (734 aa).

An N-terminal signal peptide occupies residues methionine 1–serine 17. Topologically, residues glycine 18 to threonine 573 are extracellular. Ig-like C2-type domains are found at residues proline 21 to serine 98, proline 99 to asparagine 182, proline 192 to lysine 270, proline 284 to serine 369, proline 383 to threonine 470, and proline 476 to threonine 563. Intrachain disulfides connect cysteine 44–cysteine 82, cysteine 120–cysteine 163, cysteine 211–cysteine 260, cysteine 309–cysteine 358, cysteine 404–cysteine 451, and cysteine 497–cysteine 544. Asparagine 561 is a glycosylation site (N-linked (GlcNAc...) asparagine). A helical membrane pass occupies residues alanine 574–leucine 594. Residues histidine 595 to histidine 734 are Cytoplasmic-facing. Residues proline 603 to proline 655 are disordered. The segment covering alanine 608 to proline 627 has biased composition (polar residues). The segment covering serine 628–histidine 637 has biased composition (basic and acidic residues). 4 short sequence motifs (ITIM motif) span residues proline 648–valine 653, proline 660–isoleucine 665, valine 690–leucine 695, and glutamate 720–valine 725. A phosphotyrosine mark is found at tyrosine 650, tyrosine 662, tyrosine 692, and tyrosine 722. The interval leucine 695–histidine 734 is disordered.

As to quaternary structure, interacts (via phosphorylated ITIM motifs) with phosphatases INPP5D, PTPN6 and PTPN11. Interacts (via ITIM motifs) SYK and ZAP70. Interacts with IZUMO1R/JUNO. Interacts (via extracellular domain) with IZUMO1; the interaction replaces IZUMO1R/JUNO as IZUMO1 receptor after adhesion between sperm and egg. Post-translationally, phosphorylated on cytoplasmic tyrosines; required for interaction with protein tyrosine phosphatases and protein tyrosine kinases. Primarily expressed in secondary lymphoid tissues by mature subsets of B-cells. Low expression on transitional B cells which increases to higher surface expression on mature and memory B-cells with innate-like features (at protein level). Expressed a low levels in naive and germinal center B-cells but also expressed in NK cells (at protein level). Expressed in unfertilized oocytes (at protein level). Expressed in a population of thymically derived naturally occurring regulatory T-cells that exhibits a memory phenotype, specialized in suppressing immune response to self-antigens. Detected in spleen, lymph node, peripheral blood lymphocytes, thymus, bone marrow, kidney, salivary gland, adrenal gland and uterus.

It is found in the cell membrane. Its subcellular location is the cell projection. The protein localises to the microvillus membrane. Promotes TLR9-induced B-cell proliferation, activation and survival but inhibits antibody production and suppresses plasma cell differentiation. Enhances activation of NF-kappa-B and MAPK signaling pathways in TLR9 stimulated B-cells. Has inhibitory potentional on B-cell receptor (BCR)-mediated signaling, possibly through association with SH2 domain-containing phosphatases. Inhibits cell tyrosine phosphorylation, calcium mobilization and activation-induced cell death induced through BCR signaling. Regulatory T-cells expressing FCRL3 exhibit a memory phenotype, are relatively nonresponsive to antigenic stimulation in presence of IL2 and have reduced capacity to suppress the proliferation of effector T-cells. Acts as a human-specific epitope on the cell surface of oocytes (oolemma) and plays a role during sperm-egg adhesion and fusion. Interacts with the IZUMO1-IZUMO1R/JUNO sperm-egg complex and replaces IZUMO1R/JUNO as IZUMO1 receptor during fertilization, thereby permitting species-specific gamete fusion. The chain is Fc receptor-like protein 3 from Homo sapiens (Human).